Consider the following 514-residue polypeptide: 6-phosphofructo-2-kinase/fructose-2,6-bisphosphatase 3 (514 aa).

The interval 1–245 (MPLELTQSRV…VYYLMNIHVQ (245 aa)) is 6-phosphofructo-2-kinase. Residue 42–50 (GLPARGKTY) participates in ATP binding. The beta-D-fructose 6-phosphate site is built by Arg75 and Arg99. Asp125 is a catalytic residue. Beta-D-fructose 6-phosphate-binding residues include Thr127 and Arg133. Residue Cys155 is part of the active site. Position 164-169 (164-169 (NIMEVK)) interacts with ATP. 3 residues coordinate beta-D-fructose 6-phosphate: Lys169, Arg190, and Tyr194. Residues 246 to 514 (PRTIYLCRHG…QPLLGQACLT (269 aa)) form a fructose-2,6-bisphosphatase region. Arg253 is a beta-D-fructose 2,6-bisphosphate binding site. His254 (tele-phosphohistidine intermediate) is an active-site residue. Positions 260 and 266 each coordinate beta-D-fructose 2,6-bisphosphate. Residue Glu323 is the Proton donor/acceptor of the active site. Positions 334, 348, 352, 363, 389, and 393 each coordinate beta-D-fructose 2,6-bisphosphate. ATP is bound at residue 345 to 348 (YALR). Residues 389–393 (QAVLR) and Tyr425 contribute to the ATP site. Positions 444–475 (ERSEDAKKGPNPLMRRNSVTPLASPEPTKKPR) are disordered. Residue Ser461 is modified to Phosphoserine; by AMPK and PKA. Position 463 is a phosphothreonine (Thr463). Ser467 is subject to Phosphoserine. A Phosphothreonine; by PKC modification is found at Thr471.

This sequence in the C-terminal section; belongs to the phosphoglycerate mutase family. In terms of assembly, homodimer. Forms a heterodimer with PFKFB2. Phosphorylation by AMPK stimulates activity.

It catalyses the reaction beta-D-fructose 2,6-bisphosphate + H2O = beta-D-fructose 6-phosphate + phosphate. The catalysed reaction is beta-D-fructose 6-phosphate + ATP = beta-D-fructose 2,6-bisphosphate + ADP + H(+). Its function is as follows. Catalyzes both the synthesis and degradation of fructose 2,6-bisphosphate. The polypeptide is 6-phosphofructo-2-kinase/fructose-2,6-bisphosphatase 3 (PFKFB3) (Pongo abelii (Sumatran orangutan)).